The sequence spans 1263 residues: DNA topoisomerase 2 (1263 aa).

ATP is bound by residues Asn80, Asn109, 137-139 (STN), and 150-157 (GKNGFGAK). Positions 329 to 331 (VKK) are interaction with DNA. Residue 362–364 (QTK) participates in ATP binding. Residues 439 to 553 (CTLILTEGDS…SLVKYEGFIQ (115 aa)) enclose the Toprim domain. Glu445, Asp522, and Asp524 together coordinate Mg(2+). Residues 737 to 1223 (VPNLMDGFKP…SPEEIWEEEL (487 aa)) form the Topo IIA-type catalytic domain. The active-site O-(5'-phospho-DNA)-tyrosine intermediate is the Tyr828. The tract at residues 977 to 1015 (KKASKAVSSAKNTKTTTKAGSKTGSRTRKNPALAKKSQK) is disordered. The segment covering 981 to 1000 (KAVSSAKNTKTTTKAGSKTG) has biased composition (low complexity). The interval 1068-1077 (KLVKPLNLTN) is interaction with DNA. A disordered region spans residues 1244 to 1263 (LLNKKKGSTGKKSRKTSTQK). Over residues 1247–1263 (KKKGSTGKKSRKTSTQK) the composition is skewed to basic residues.

Belongs to the type II topoisomerase family. Mg(2+) serves as cofactor. Requires Mn(2+) as cofactor. It depends on Ca(2+) as a cofactor.

The catalysed reaction is ATP-dependent breakage, passage and rejoining of double-stranded DNA.. In terms of biological role, can introduce negative superhelical turns into double-stranded circular DNA. This Acanthamoeba polyphaga (Amoeba) protein is DNA topoisomerase 2 (TOP2).